Reading from the N-terminus, the 510-residue chain is ETS translocation variant 5 (510 aa).

A disordered region spans residues 132–245 (KPLTPPATPL…PGDSRPSYHR (114 aa)). Low complexity predominate over residues 163-174 (TPGAGPVQGVGP). Positions 211-224 (QYPSEQRFQRQLSE) are enriched in polar residues. Serine 248 bears the Phosphoserine mark. Residue lysine 350 forms a Glycyl lysine isopeptide (Lys-Gly) (interchain with G-Cter in SUMO2) linkage. Residues 368–448 (LQLWQFLVTL…AGERYVYKFV (81 aa)) constitute a DNA-binding region (ETS).

It belongs to the ETS family. In terms of assembly, interacts (via C-terminal) with ZMYM5 (via N-terminal 120 amino acid region). As to expression, in the brain, expressed predominantly in the cerebral cortex, the amygdala and the hypothalamus. Within the cerebral cortex, there is conspicuously high expression in cortical layers 2, 4 and 6 while expression is almost absent from layers 1, 3 and 5. High expression is also observed in the dorsal and ventral endopiriform claustrum. Strong expression is observed in limited parts of the amygdala including the basolateral amygdaloid nucleus, the bed stria terminalis and the central amygdaloid nucleus. Low to moderate levels are found in the hypothalamus while expression is almost absent in the thalamus. Hypothalamic expression is seen in the dorsomedial hypothalamic nucleus and also the central, dorsomedial and ventrolateral parts of the ventromedial hypothalamic nucleus. Strong expression is also identified in the nigrostriatal tract. In the mesencephalon, expression is restricted to the ventral tegmental area including the parabrachial pigmented nucleus. In the hippocampus, strongly expressed in the pyramidal cell layer. Some expression is also found in the lacunosum moleculare layer. Low levels of expression in the cerebellum, including the granular, molecular and Purkinje cell layers.

Its subcellular location is the nucleus. Binds to DNA sequences containing the consensus nucleotide core sequence 5'-GGAA.-3'. In Mus musculus (Mouse), this protein is ETS translocation variant 5 (Etv5).